The sequence spans 315 residues: MGDWNNSDAVEPIFILRGFPGLEYVHSWLSILFCLAYLVAFMGNVTILSVIWIESSLHQPMYYFISILAVNDLGMSLSTLPTMLAVLWLDAPEIQASACYAQLFFIHTFTFLESSVLLAMAFDRFVAICHPLHYPTILTNSVIGKIGLACLLRSLGVVLPTPLLLRHYHYCHGNALSHAFCLHQDVLRLSCTDARTNSIYGLCVVIATLGVDSIFILLSYVLILNTVLDIASREEQLKALNTCVSHICVVLIFFVPVIGVSMVHRFGKHLSPIVHILMADIYLLLPPVLNPIVYSVRTKQIRLGILHKFVLRRRF.

Over 1 to 27 (MGDWNNSDAVEPIFILRGFPGLEYVHS) the chain is Extracellular. An N-linked (GlcNAc...) asparagine glycan is attached at Asn5. A helical membrane pass occupies residues 28–48 (WLSILFCLAYLVAFMGNVTIL). Topologically, residues 49–56 (SVIWIESS) are cytoplasmic. A helical membrane pass occupies residues 57-77 (LHQPMYYFISILAVNDLGMSL). At 78–101 (STLPTMLAVLWLDAPEIQASACYA) the chain is on the extracellular side. A disulfide bridge links Cys99 with Cys191. A helical membrane pass occupies residues 102-122 (QLFFIHTFTFLESSVLLAMAF). At 123-141 (DRFVAICHPLHYPTILTNS) the chain is on the cytoplasmic side. Residues 142-162 (VIGKIGLACLLRSLGVVLPTP) form a helical membrane-spanning segment. Topologically, residues 163–198 (LLLRHYHYCHGNALSHAFCLHQDVLRLSCTDARTNS) are extracellular. A helical membrane pass occupies residues 199–219 (IYGLCVVIATLGVDSIFILLS). Topologically, residues 220-239 (YVLILNTVLDIASREEQLKA) are cytoplasmic. The helical transmembrane segment at 240–260 (LNTCVSHICVVLIFFVPVIGV) threads the bilayer. The Extracellular segment spans residues 261 to 275 (SMVHRFGKHLSPIVH). A helical membrane pass occupies residues 276–296 (ILMADIYLLLPPVLNPIVYSV). The Cytoplasmic portion of the chain corresponds to 297–315 (RTKQIRLGILHKFVLRRRF).

The protein belongs to the G-protein coupled receptor 1 family.

The protein resides in the cell membrane. In terms of biological role, odorant receptor. The protein is Olfactory receptor 51L1 (OR51L1) of Homo sapiens (Human).